Reading from the N-terminus, the 366-residue chain is Pectinesterase A (366 aa).

Residues 1–24 (MLKTISGTLALSLIIAASVHQAQA) form the signal peptide. Substrate-binding residues include threonine 109 and glutamine 153. Residue aspartate 178 is the Proton donor of the active site. Cysteine 192 and cysteine 212 form a disulfide bridge. The active-site Nucleophile is aspartate 199. Substrate is bound by residues arginine 219, asparagine 226, tyrosine 230, arginine 267, tryptophan 269, and threonine 272.

Belongs to the pectinesterase family. As to quaternary structure, monomer.

The protein resides in the secreted. It carries out the reaction [(1-&gt;4)-alpha-D-galacturonosyl methyl ester](n) + n H2O = [(1-&gt;4)-alpha-D-galacturonosyl](n) + n methanol + n H(+). Its pathway is glycan metabolism; pectin degradation; 2-dehydro-3-deoxy-D-gluconate from pectin: step 1/5. Functionally, involved in maceration and soft-rotting of plant tissue. The protein is Pectinesterase A (pemA) of Dickeya chrysanthemi (Pectobacterium chrysanthemi).